A 201-amino-acid polypeptide reads, in one-letter code: Reticulon-like protein B10 (201 aa).

Residues 14–201 (VADLIMWKNR…KPTNKIKKMQ (188 aa)) form the Reticulon domain. 3 helical membrane-spanning segments follow: residues 25-45 (GGFL…KCGY), 46-66 (SFFP…FLWA), and 135-155 (FLNF…IPFL).

Its subcellular location is the endoplasmic reticulum membrane. The sequence is that of Reticulon-like protein B10 (RTNLB10) from Arabidopsis thaliana (Mouse-ear cress).